The chain runs to 87 residues: Phosphoribosyl-ATP pyrophosphatase (87 aa).

It belongs to the PRA-PH family.

Its subcellular location is the cytoplasm. It catalyses the reaction 1-(5-phospho-beta-D-ribosyl)-ATP + H2O = 1-(5-phospho-beta-D-ribosyl)-5'-AMP + diphosphate + H(+). It participates in amino-acid biosynthesis; L-histidine biosynthesis; L-histidine from 5-phospho-alpha-D-ribose 1-diphosphate: step 2/9. The protein is Phosphoribosyl-ATP pyrophosphatase of Arthrobacter sp. (strain FB24).